Here is a 162-residue protein sequence, read N- to C-terminus: Phosphopantetheine adenylyltransferase (162 aa).

Thr-9 serves as a coordination point for substrate. ATP is bound by residues 9 to 10 and His-17; that span reads TF. The substrate site is built by Lys-41, Leu-76, and Arg-90. Residues 91–93, Glu-101, and 126–132 each bind ATP; these read GLR and HQAIASR.

Belongs to the bacterial CoaD family. As to quaternary structure, homohexamer. Mg(2+) is required as a cofactor.

The protein localises to the cytoplasm. It carries out the reaction (R)-4'-phosphopantetheine + ATP + H(+) = 3'-dephospho-CoA + diphosphate. It participates in cofactor biosynthesis; coenzyme A biosynthesis; CoA from (R)-pantothenate: step 4/5. Reversibly transfers an adenylyl group from ATP to 4'-phosphopantetheine, yielding dephospho-CoA (dPCoA) and pyrophosphate. This chain is Phosphopantetheine adenylyltransferase, found in Caulobacter sp. (strain K31).